Consider the following 128-residue polypeptide: MNLIQTLEAEEIARLNKTIPDFSAGDTVIVNVNVVEGSRKRVQAYEGVVIAKRNRGLNSGFIVRKISSGEGVERTFQTYSPLIASIEVKRRGDVRRAKLYYLRERSGKSARIKEKLPARTKAAAASAA.

Belongs to the bacterial ribosomal protein bL19 family.

Functionally, this protein is located at the 30S-50S ribosomal subunit interface and may play a role in the structure and function of the aminoacyl-tRNA binding site. This is Large ribosomal subunit protein bL19 from Verminephrobacter eiseniae (strain EF01-2).